Consider the following 156-residue polypeptide: Transcriptional repressor NrdR (156 aa).

A zinc finger spans residues 3–34; that stretch reads CPFCSETDTKVIDSRLVADGAQVRRRRECLTC. The 91-residue stretch at 49–139 folds into the ATP-cone domain; the sequence is PRVIKQDGTR…VYRSFQDLSE (91 aa).

It belongs to the NrdR family. It depends on Zn(2+) as a cofactor.

In terms of biological role, negatively regulates transcription of bacterial ribonucleotide reductase nrd genes and operons by binding to NrdR-boxes. In Saccharophagus degradans (strain 2-40 / ATCC 43961 / DSM 17024), this protein is Transcriptional repressor NrdR.